A 179-amino-acid chain; its full sequence is Large ribosomal subunit protein uL6 (179 aa).

This sequence belongs to the universal ribosomal protein uL6 family. As to quaternary structure, part of the 50S ribosomal subunit.

In terms of biological role, this protein binds to the 23S rRNA, and is important in its secondary structure. It is located near the subunit interface in the base of the L7/L12 stalk, and near the tRNA binding site of the peptidyltransferase center. The protein is Large ribosomal subunit protein uL6 of Metamycoplasma arthritidis (strain 158L3-1) (Mycoplasma arthritidis).